A 176-amino-acid chain; its full sequence is MEVKATTILAVRRDGKTAVGGDGQVTLGSSVIKHTARKIRKLYKGQVIVGFAGSAADGLALMERLEAKLEEYRGNLLKASVQLAKDWRMDKYLRRLEALLLAVDREHMLLISGNGDIIEPDEPVLAIGSGGDYARAAALALYRNTDLSAREIVEKSLKIASEICIYTNDKFVIEEI.

Threonine 6 is a catalytic residue. The Na(+) site is built by serine 161, cysteine 164, and threonine 167.

Belongs to the peptidase T1B family. HslV subfamily. In terms of assembly, a double ring-shaped homohexamer of HslV is capped on each side by a ring-shaped HslU homohexamer. The assembly of the HslU/HslV complex is dependent on binding of ATP.

The protein resides in the cytoplasm. The catalysed reaction is ATP-dependent cleavage of peptide bonds with broad specificity.. Allosterically activated by HslU binding. Its function is as follows. Protease subunit of a proteasome-like degradation complex believed to be a general protein degrading machinery. The protein is ATP-dependent protease subunit HslV of Aquifex aeolicus (strain VF5).